A 555-amino-acid chain; its full sequence is Glucose-6-phosphate isomerase (555 aa).

Glu355 serves as the catalytic Proton donor. Active-site residues include His386 and Lys514.

Belongs to the GPI family.

It is found in the cytoplasm. The catalysed reaction is alpha-D-glucose 6-phosphate = beta-D-fructose 6-phosphate. It participates in carbohydrate biosynthesis; gluconeogenesis. The protein operates within carbohydrate degradation; glycolysis; D-glyceraldehyde 3-phosphate and glycerone phosphate from D-glucose: step 2/4. Its function is as follows. Catalyzes the reversible isomerization of glucose-6-phosphate to fructose-6-phosphate. This Buchnera aphidicola subsp. Schizaphis graminum (strain Sg) protein is Glucose-6-phosphate isomerase.